Consider the following 394-residue polypeptide: GDSL esterase/lipase At2g27360 (394 aa).

The first 24 residues, 1–24 (MASQDCHMLLSFFISTFLITVVTS), serve as a signal peptide directing secretion. S40 serves as the catalytic Nucleophile. Residues N136 and N319 are each glycosylated (N-linked (GlcNAc...) asparagine). Residues D344 and H347 contribute to the active site. 2 N-linked (GlcNAc...) asparagine glycosylation sites follow: N371 and N382.

It belongs to the 'GDSL' lipolytic enzyme family.

The protein localises to the secreted. This chain is GDSL esterase/lipase At2g27360, found in Arabidopsis thaliana (Mouse-ear cress).